The sequence spans 374 residues: Flagellar P-ring protein 1 (374 aa).

An N-terminal signal peptide occupies residues 1 to 29 (MPGVRWVRIVGVACAALSALALSVTSASA).

Belongs to the FlgI family. The basal body constitutes a major portion of the flagellar organelle and consists of four rings (L,P,S, and M) mounted on a central rod.

The protein resides in the periplasm. Its subcellular location is the bacterial flagellum basal body. In terms of biological role, assembles around the rod to form the L-ring and probably protects the motor/basal body from shearing forces during rotation. The protein is Flagellar P-ring protein 1 of Bradyrhizobium diazoefficiens (strain JCM 10833 / BCRC 13528 / IAM 13628 / NBRC 14792 / USDA 110).